The primary structure comprises 95 residues: Putative pterin-4-alpha-carbinolamine dehydratase (95 aa).

This sequence belongs to the pterin-4-alpha-carbinolamine dehydratase family.

The enzyme catalyses (4aS,6R)-4a-hydroxy-L-erythro-5,6,7,8-tetrahydrobiopterin = (6R)-L-erythro-6,7-dihydrobiopterin + H2O. In Solibacter usitatus (strain Ellin6076), this protein is Putative pterin-4-alpha-carbinolamine dehydratase.